We begin with the raw amino-acid sequence, 72 residues long: DNA gyrase inhibitor YacG (72 aa).

Cysteine 17, cysteine 20, cysteine 32, and cysteine 36 together coordinate Zn(2+). Positions 52–72 (PGPEEDEMSYPPHSNDGNRSR) are disordered.

It belongs to the DNA gyrase inhibitor YacG family. In terms of assembly, interacts with GyrB. Zn(2+) serves as cofactor.

In terms of biological role, inhibits all the catalytic activities of DNA gyrase by preventing its interaction with DNA. Acts by binding directly to the C-terminal domain of GyrB, which probably disrupts DNA binding by the gyrase. The polypeptide is DNA gyrase inhibitor YacG (Methylorubrum extorquens (strain CM4 / NCIMB 13688) (Methylobacterium extorquens)).